The sequence spans 407 residues: 12S rRNA N(4)-cytidine methyltransferase METTL15 (407 aa).

The interval 44–63 (EAQEETDQTGIQELHRSQDR) is disordered. S-adenosyl-L-methionine-binding positions include 100–102 (GGH), Asp-119, Phe-146, Asp-169, and Gln-176. Ser-358 carries the post-translational modification Phosphoserine. A disordered region spans residues 386–407 (EDEDVQDNPRGRSAKLRAAIKL). Residues 397 to 407 (RSAKLRAAIKL) are compositionally biased toward basic residues.

The protein belongs to the methyltransferase superfamily. RsmH family.

It is found in the mitochondrion matrix. The catalysed reaction is cytidine(839) in 12S rRNA + S-adenosyl-L-methionine = N(4)-methylcytidine(839) in 12S rRNA + S-adenosyl-L-homocysteine + H(+). In terms of biological role, N4-methylcytidine (m4C) methyltransferase responsible for the methylation of position C839 in mitochondrial 12S rRNA. Involved in the stabilization of 12S rRNA folding, therefore facilitating the assembly of the mitochondrial small ribosomal subunits. This chain is 12S rRNA N(4)-cytidine methyltransferase METTL15 (METTL15), found in Bos taurus (Bovine).